Here is a 121-residue protein sequence, read N- to C-terminus: MLVIFLGILGLLANQVSSQLVGQLHPTENPSENELEYWCTYMECCQFCWDCQNGLCVNKLGNTTILENEYVHPCIVSRWLNKCMYDLGQGIDHVMVCSQPKYWNPYKILKKEWKENNSQNK.

The signal sequence occupies residues 1 to 18; that stretch reads MLVIFLGILGLLANQVSS. N-linked (GlcNAc...) asparagine; by host glycosylation is found at asparagine 62 and asparagine 116.

The protein belongs to the asfivirus MGF 110 family.

Plays a role in virus cell tropism, and may be required for efficient virus replication in macrophages. The polypeptide is Protein MGF 110-5L (African swine fever virus (isolate Tick/South Africa/Pretoriuskop Pr4/1996) (ASFV)).